We begin with the raw amino-acid sequence, 308 residues long: D-alanine--D-alanine ligase (308 aa).

In terms of domain architecture, ATP-grasp spans 100-295 (KEVFVRNGLP…FDGLIGRLIE (196 aa)). An ATP-binding site is contributed by 127–180 (PFAFPAFIKSNNGGSSLALHRVSCPGELARALDELFTRGGEAIIEPAVEGVEVT). Mg(2+) contacts are provided by Asp-249, Glu-262, and Asn-264.

It belongs to the D-alanine--D-alanine ligase family. Requires Mg(2+) as cofactor. Mn(2+) serves as cofactor.

The protein localises to the cytoplasm. The catalysed reaction is 2 D-alanine + ATP = D-alanyl-D-alanine + ADP + phosphate + H(+). It participates in cell wall biogenesis; peptidoglycan biosynthesis. In terms of biological role, cell wall formation. The sequence is that of D-alanine--D-alanine ligase from Oleidesulfovibrio alaskensis (strain ATCC BAA-1058 / DSM 17464 / G20) (Desulfovibrio alaskensis).